The primary structure comprises 229 residues: Potassium/proton antiporter CemA (229 aa).

4 helical membrane-spanning segments follow: residues phenylalanine 7–leucine 27, isoleucine 114–leucine 134, isoleucine 154–isoleucine 174, and isoleucine 189–isoleucine 209.

It belongs to the CemA family.

It is found in the plastid. It localises to the chloroplast inner membrane. The catalysed reaction is K(+)(in) + H(+)(out) = K(+)(out) + H(+)(in). Functionally, contributes to K(+)/H(+) antiport activity by supporting proton efflux to control proton extrusion and homeostasis in chloroplasts in a light-dependent manner to modulate photosynthesis. Prevents excessive induction of non-photochemical quenching (NPQ) under continuous-light conditions. Indirectly promotes efficient inorganic carbon uptake into chloroplasts. This chain is Potassium/proton antiporter CemA, found in Vitis vinifera (Grape).